The sequence spans 414 residues: Histidine--tRNA ligase (414 aa).

It belongs to the class-II aminoacyl-tRNA synthetase family. Homodimer.

Its subcellular location is the cytoplasm. It catalyses the reaction tRNA(His) + L-histidine + ATP = L-histidyl-tRNA(His) + AMP + diphosphate + H(+). This Ehrlichia ruminantium (strain Welgevonden) protein is Histidine--tRNA ligase.